The sequence spans 466 residues: Dihydrolipoyl dehydrogenase 3 (466 aa).

Residues 33–42 (EGRSTLGGTC), lysine 51, and glycine 115 contribute to the FAD site. Cysteine 42 and cysteine 47 are joined by a disulfide. Residues 181–185 (GAGVI), glutamate 204, valine 238, and 271–274 (AIGR) each bind NAD(+). Positions 313 and 321 each coordinate FAD. The active-site Proton acceptor is the histidine 445.

It belongs to the class-I pyridine nucleotide-disulfide oxidoreductase family. In terms of assembly, homodimer. FAD serves as cofactor.

The protein localises to the cytoplasm. It catalyses the reaction N(6)-[(R)-dihydrolipoyl]-L-lysyl-[protein] + NAD(+) = N(6)-[(R)-lipoyl]-L-lysyl-[protein] + NADH + H(+). LPD-3 may substitute for lipoamide dehydrogenase of the 2-oxoglutarate dehydrogenase and pyruvate multienzyme complexes when the latter is inactive or missing. The protein is Dihydrolipoyl dehydrogenase 3 (lpd3) of Pseudomonas putida (Arthrobacter siderocapsulatus).